The primary structure comprises 103 residues: MYAVLTTGGKQYRVQEGDVLFVEKLNAEVDSTVELTEVLAVAKDGEIKVGAPVVEGAKVVAKVLAQGKAKKVVVFKYKRKKDYRRKNGHRQPYTKIVIEKIEA.

This sequence belongs to the bacterial ribosomal protein bL21 family. As to quaternary structure, part of the 50S ribosomal subunit. Contacts protein L20.

Its function is as follows. This protein binds to 23S rRNA in the presence of protein L20. The sequence is that of Large ribosomal subunit protein bL21 from Clostridium perfringens (strain ATCC 13124 / DSM 756 / JCM 1290 / NCIMB 6125 / NCTC 8237 / Type A).